Reading from the N-terminus, the 206-residue chain is Protein GrpE (206 aa).

The span at 1 to 10 (MTDPDLHQND) shows a compositional bias: basic and acidic residues. The tract at residues 1–38 (MTDPDLHQNDPENPAQASEPVVSKPYIMPDDPETGSAE) is disordered.

Belongs to the GrpE family. As to quaternary structure, homodimer.

The protein resides in the cytoplasm. Functionally, participates actively in the response to hyperosmotic and heat shock by preventing the aggregation of stress-denatured proteins, in association with DnaK and GrpE. It is the nucleotide exchange factor for DnaK and may function as a thermosensor. Unfolded proteins bind initially to DnaJ; upon interaction with the DnaJ-bound protein, DnaK hydrolyzes its bound ATP, resulting in the formation of a stable complex. GrpE releases ADP from DnaK; ATP binding to DnaK triggers the release of the substrate protein, thus completing the reaction cycle. Several rounds of ATP-dependent interactions between DnaJ, DnaK and GrpE are required for fully efficient folding. The protein is Protein GrpE of Bradyrhizobium sp. (strain ORS 278).